A 337-amino-acid polypeptide reads, in one-letter code: Biotin synthase (337 aa).

A Radical SAM core domain is found at P58–R283. Residues C73, C77, and C80 each contribute to the [4Fe-4S] cluster site. C116, C149, C208, and R278 together coordinate [2Fe-2S] cluster.

Belongs to the radical SAM superfamily. Biotin synthase family. As to quaternary structure, homodimer. It depends on [4Fe-4S] cluster as a cofactor. [2Fe-2S] cluster serves as cofactor.

It catalyses the reaction (4R,5S)-dethiobiotin + (sulfur carrier)-SH + 2 reduced [2Fe-2S]-[ferredoxin] + 2 S-adenosyl-L-methionine = (sulfur carrier)-H + biotin + 2 5'-deoxyadenosine + 2 L-methionine + 2 oxidized [2Fe-2S]-[ferredoxin]. It functions in the pathway cofactor biosynthesis; biotin biosynthesis; biotin from 7,8-diaminononanoate: step 2/2. Catalyzes the conversion of dethiobiotin (DTB) to biotin by the insertion of a sulfur atom into dethiobiotin via a radical-based mechanism. The sequence is that of Biotin synthase from Rhodococcus jostii (strain RHA1).